The sequence spans 233 residues: Purine nucleoside phosphorylase DeoD-type (233 aa).

His-4 lines the a purine D-ribonucleoside pocket. Phosphate-binding positions include Gly-20, Arg-24, Arg-43, and 87-90 (RVGT). A purine D-ribonucleoside is bound by residues 178 to 180 (EME) and 202 to 203 (SD). Asp-203 serves as the catalytic Proton donor.

It belongs to the PNP/UDP phosphorylase family. As to quaternary structure, homohexamer; trimer of homodimers.

The enzyme catalyses a purine D-ribonucleoside + phosphate = a purine nucleobase + alpha-D-ribose 1-phosphate. The catalysed reaction is a purine 2'-deoxy-D-ribonucleoside + phosphate = a purine nucleobase + 2-deoxy-alpha-D-ribose 1-phosphate. Catalyzes the reversible phosphorolytic breakdown of the N-glycosidic bond in the beta-(deoxy)ribonucleoside molecules, with the formation of the corresponding free purine bases and pentose-1-phosphate. The protein is Purine nucleoside phosphorylase DeoD-type of Listeria monocytogenes serotype 4b (strain CLIP80459).